An 807-amino-acid polypeptide reads, in one-letter code: Glycerol-3-phosphate acyltransferase (807 aa).

Residues 308–313 (CHRSHM) carry the HXXXXD motif motif.

This sequence belongs to the GPAT/DAPAT family.

Its subcellular location is the cell inner membrane. The catalysed reaction is sn-glycerol 3-phosphate + an acyl-CoA = a 1-acyl-sn-glycero-3-phosphate + CoA. The protein operates within phospholipid metabolism; CDP-diacylglycerol biosynthesis; CDP-diacylglycerol from sn-glycerol 3-phosphate: step 1/3. The chain is Glycerol-3-phosphate acyltransferase from Shewanella baltica (strain OS195).